A 682-amino-acid polypeptide reads, in one-letter code: Acyl-CoA synthetase short-chain family member 3, mitochondrial (682 aa).

The transit peptide at 1–29 directs the protein to the mitochondrion; that stretch reads MKPSWLQCRKVTGAGTLGAPLPGSPSVRG. 222–225 serves as a coordination point for CoA; the sequence is EPGR. Residues 420–422 and 441–446 contribute to the ATP site; these read GER and DHWWQT. An N6-succinyllysine modification is found at Lys513. Residue Lys519 is modified to N6-acetyllysine. Positions 534, 549, and 560 each coordinate ATP. Residue Arg619 coordinates CoA.

The protein belongs to the ATP-dependent AMP-binding enzyme family.

The protein resides in the mitochondrion matrix. The catalysed reaction is acetate + ATP + CoA = acetyl-CoA + AMP + diphosphate. It carries out the reaction propanoate + ATP + CoA = propanoyl-CoA + AMP + diphosphate. The enzyme catalyses butanoate + ATP + CoA = butanoyl-CoA + AMP + diphosphate. Functionally, catalyzes the synthesis of acetyl-CoA from short-chain fatty acids. Propionate is the preferred substrate but can also utilize acetate and butyrate with a much lower affinity. The sequence is that of Acyl-CoA synthetase short-chain family member 3, mitochondrial (Acss3) from Mus musculus (Mouse).